The primary structure comprises 305 residues: Glutaminase (305 aa).

Positions 61, 113, 158, 165, 189, 241, and 259 each coordinate substrate.

This sequence belongs to the glutaminase family. As to quaternary structure, homotetramer.

The enzyme catalyses L-glutamine + H2O = L-glutamate + NH4(+). This is Glutaminase from Clostridium botulinum (strain Kyoto / Type A2).